Reading from the N-terminus, the 426-residue chain is Adenylosuccinate synthetase (426 aa).

Residues 11–17 (GDEGKGK) and 39–41 (GHT) each bind GTP. Asp-12 (proton acceptor) is an active-site residue. Residues Asp-12 and Gly-39 each contribute to the Mg(2+) site. IMP is bound by residues 12–15 (DEGK), 37–40 (NAGH), Thr-130, Arg-144, Asn-226, Thr-241, and Arg-305. The active-site Proton donor is the His-40. Position 301–307 (301–307 (VTTGRKR)) interacts with substrate. Residues Arg-307, 333 to 335 (KLD), and 415 to 417 (GTG) contribute to the GTP site.

It belongs to the adenylosuccinate synthetase family. Homodimer. Mg(2+) serves as cofactor.

The protein resides in the cytoplasm. The enzyme catalyses IMP + L-aspartate + GTP = N(6)-(1,2-dicarboxyethyl)-AMP + GDP + phosphate + 2 H(+). It functions in the pathway purine metabolism; AMP biosynthesis via de novo pathway; AMP from IMP: step 1/2. Functionally, plays an important role in the de novo pathway and in the salvage pathway of purine nucleotide biosynthesis. Catalyzes the first committed step in the biosynthesis of AMP from IMP. This is Adenylosuccinate synthetase from Meyerozyma guilliermondii (strain ATCC 6260 / CBS 566 / DSM 6381 / JCM 1539 / NBRC 10279 / NRRL Y-324) (Yeast).